A 51-amino-acid chain; its full sequence is Cytochrome b559 subunit beta (51 aa).

The helical transmembrane segment at W26–S42 threads the bilayer. H30 is a heme binding site.

The protein belongs to the PsbE/PsbF family. As to quaternary structure, heterodimer of an alpha subunit and a beta subunit. PSII is composed of 1 copy each of membrane proteins PsbA, PsbB, PsbC, PsbD, PsbE, PsbF, PsbH, PsbI, PsbJ, PsbK, PsbL, PsbM, PsbT, PsbY, PsbZ, Psb30/Ycf12, at least 3 peripheral proteins of the oxygen-evolving complex and a large number of cofactors. It forms dimeric complexes. The cofactor is heme b.

The protein resides in the plastid. The protein localises to the chloroplast thylakoid membrane. Functionally, this b-type cytochrome is tightly associated with the reaction center of photosystem II (PSII). PSII is a light-driven water:plastoquinone oxidoreductase that uses light energy to abstract electrons from H(2)O, generating O(2) and a proton gradient subsequently used for ATP formation. It consists of a core antenna complex that captures photons, and an electron transfer chain that converts photonic excitation into a charge separation. This chain is Cytochrome b559 subunit beta, found in Bigelowiella natans (Pedinomonas minutissima).